A 411-amino-acid polypeptide reads, in one-letter code: Na(+)-translocating NADH-quinone reductase subunit F (411 aa).

A helical transmembrane segment spans residues 6-26 (AIGGVAMFTLIIMGLVAIILA). A 2Fe-2S ferredoxin-type domain is found at 35-129 (GDVTIHINDN…DMKIEIDPEF (95 aa)). [2Fe-2S] cluster-binding residues include C72, C78, C81, and C113. One can recognise an FAD-binding FR-type domain in the interval 132-273 (VQKWECEVIS…SGPYGEFFAK (142 aa)).

It belongs to the NqrF family. As to quaternary structure, composed of six subunits; NqrA, NqrB, NqrC, NqrD, NqrE and NqrF. [2Fe-2S] cluster serves as cofactor. The cofactor is FAD.

Its subcellular location is the cell inner membrane. The enzyme catalyses a ubiquinone + n Na(+)(in) + NADH + H(+) = a ubiquinol + n Na(+)(out) + NAD(+). NQR complex catalyzes the reduction of ubiquinone-1 to ubiquinol by two successive reactions, coupled with the transport of Na(+) ions from the cytoplasm to the periplasm. The first step is catalyzed by NqrF, which accepts electrons from NADH and reduces ubiquinone-1 to ubisemiquinone by a one-electron transfer pathway. In Psychrobacter cryohalolentis (strain ATCC BAA-1226 / DSM 17306 / VKM B-2378 / K5), this protein is Na(+)-translocating NADH-quinone reductase subunit F.